The following is a 239-amino-acid chain: Small ribosomal subunit protein uS2 (239 aa).

This sequence belongs to the universal ribosomal protein uS2 family.

In Synechococcus sp. (strain WH7803), this protein is Small ribosomal subunit protein uS2.